Consider the following 244-residue polypeptide: Rho-related GTP-binding protein RhoE (244 aa).

Residue 30–37 (GDSQCGRT) coordinates GTP. The Effector region signature appears at 52 to 60 (YVPTVFENY). GTP-binding positions include 77-81 (DTSGS) and 135-138 (CKSD). Cys241 carries the cysteine methyl ester modification. Cys241 carries the S-farnesyl cysteine lipid modification. A propeptide spans 242 to 244 (TVM) (removed in mature form).

This sequence belongs to the small GTPase superfamily. Rho family. As to quaternary structure, binds ROCK1. Interacts with UBXD5.

It is found in the cell membrane. Binds GTP but lacks intrinsic GTPase activity and is resistant to Rho-specific GTPase-activating proteins. The protein is Rho-related GTP-binding protein RhoE (RND3) of Sus scrofa (Pig).